The chain runs to 162 residues: Regulator of sigma D (162 aa).

This sequence belongs to the Rsd/AlgQ family. In terms of assembly, interacts with RpoD.

The protein resides in the cytoplasm. Its function is as follows. Binds RpoD and negatively regulates RpoD-mediated transcription activation by preventing the interaction between the primary sigma factor RpoD with the catalytic core of the RNA polymerase and with promoter DNA. May be involved in replacement of the RNA polymerase sigma subunit from RpoD to RpoS during the transition from exponential growth to the stationary phase. The polypeptide is Regulator of sigma D (Salmonella paratyphi A (strain ATCC 9150 / SARB42)).